Consider the following 410-residue polypeptide: Pyrophosphate--fructose 6-phosphate 1-phosphotransferase (410 aa).

G12 serves as a coordination point for diphosphate. D121 contacts Mg(2+). Substrate is bound by residues 149 to 151, 194 to 196, E266, and 323 to 326; these read TID, MGR, and YFSR. D151 functions as the Proton acceptor in the catalytic mechanism.

It belongs to the phosphofructokinase type A (PFKA) family. PPi-dependent PFK group II subfamily. Clade 'P' sub-subfamily. As to quaternary structure, homodimer or homotetramer. It depends on Mg(2+) as a cofactor.

The protein resides in the cytoplasm. The enzyme catalyses beta-D-fructose 6-phosphate + diphosphate = beta-D-fructose 1,6-bisphosphate + phosphate + H(+). It functions in the pathway carbohydrate degradation; glycolysis; D-glyceraldehyde 3-phosphate and glycerone phosphate from D-glucose: step 3/4. Its activity is regulated as follows. Non-allosteric. Catalyzes the phosphorylation of D-fructose 6-phosphate, the first committing step of glycolysis. Uses inorganic phosphate (PPi) as phosphoryl donor instead of ATP like common ATP-dependent phosphofructokinases (ATP-PFKs), which renders the reaction reversible, and can thus function both in glycolysis and gluconeogenesis. Consistently, PPi-PFK can replace the enzymes of both the forward (ATP-PFK) and reverse (fructose-bisphosphatase (FBPase)) reactions. The sequence is that of Pyrophosphate--fructose 6-phosphate 1-phosphotransferase from Mastigamoeba balamuthi (Phreatamoeba balamuthi).